The chain runs to 29 residues: Kalata-B4 (29 aa).

Positions 1 to 29 (GLPVCGETCVGGTCNTPGCTCSWPVCTRD) form a cross-link, cyclopeptide (Gly-Asp). 3 cysteine pairs are disulfide-bonded: Cys5–Cys19, Cys9–Cys21, and Cys14–Cys26.

This is a cyclic peptide.

Functionally, probably participates in a plant defense mechanism. This chain is Kalata-B4, found in Oldenlandia affinis.